The primary structure comprises 221 residues: Protein myomaker (221 aa).

The Extracellular portion of the chain corresponds to 1–3 (MGT). The chain crosses the membrane as a helical span at residues 4–24 (VVAKLLLPTLSSLAFLPTVSI). The Cytoplasmic segment spans residues 25-29 (ATKRR). A helical membrane pass occupies residues 30–50 (FYMEAMVYLFTMFFVAFSHAC). At 51–64 (DGPGLSVLCFMRRD) the chain is on the extracellular side. The chain crosses the membrane as a helical span at residues 65–85 (ILEYFSIYGTALSMWVSLMAL). Over 86–93 (ADFDEPQR) the chain is Cytoplasmic. The chain crosses the membrane as a helical span at residues 94 to 110 (STFTMLGVLTIAVRTFH). Residues 111–113 (DRW) are Extracellular-facing. The helical transmembrane segment at 114–134 (GYGVYSGPIGTATLIIAVKWL) threads the bilayer. Over 135–153 (KKMKEKKGLYPDKSIYTQQ) the chain is Cytoplasmic. Residues 154–174 (IGPGLCFGALALMLRFFFEEW) form a helical membrane-spanning segment. Asp175 is a topological domain (extracellular). Residues 176–196 (YTYVHSFYHCALAMSFVLLLP) form a helical membrane-spanning segment. Residues 197–221 (KVNKKAGNAGAPAKLTFSTLCCTCV) lie on the Cytoplasmic side of the membrane. 2 S-palmitoyl cysteine lipidation sites follow: Cys217 and Cys218.

Belongs to the TMEM8 family. As to quaternary structure, interacts with MYMX. Post-translationally, palmitoylated at the C-terminus; palmitoylation promotes localization to the Golgi apparatus. Specifically expressed in skeletal muscle during embryogenesis and adult muscle regeneration.

It localises to the cell membrane. It is found in the golgi apparatus membrane. Functionally, myoblast-specific protein that mediates myoblast fusion, an essential step for the formation of multi-nucleated muscle fibers. Actively participates in the membrane fusion reaction by mediating the mixing of cell membrane lipids (hemifusion) upstream of MYMX. Acts independently of MYMX. Involved in skeletal muscle regeneration in response to injury by mediating the fusion of satellite cells, a population of muscle stem cells, with injured myofibers. Also involved in skeletal muscle hypertrophy, probably by mediating the fusion of satellite cells with myofibers. This Mus musculus (Mouse) protein is Protein myomaker.